Here is a 271-residue protein sequence, read N- to C-terminus: Glutamate racemase 3 (271 aa).

Substrate-binding positions include 15-16 and 47-48; these read DS and YG. Cys78 acts as the Proton donor/acceptor in catalysis. 79-80 lines the substrate pocket; sequence NT. Cys185 (proton donor/acceptor) is an active-site residue. 186 to 187 contacts substrate; that stretch reads TH.

Belongs to the aspartate/glutamate racemases family.

The enzyme catalyses L-glutamate = D-glutamate. Its pathway is cell wall biogenesis; peptidoglycan biosynthesis. Its function is as follows. Provides the (R)-glutamate required for cell wall biosynthesis. The sequence is that of Glutamate racemase 3 from Caldanaerobacter subterraneus subsp. tengcongensis (strain DSM 15242 / JCM 11007 / NBRC 100824 / MB4) (Thermoanaerobacter tengcongensis).